The chain runs to 130 residues: Small ribosomal subunit protein uS11 (130 aa).

It belongs to the universal ribosomal protein uS11 family. In terms of assembly, part of the 30S ribosomal subunit. Interacts with proteins S7 and S18. Binds to IF-3.

Functionally, located on the platform of the 30S subunit, it bridges several disparate RNA helices of the 16S rRNA. Forms part of the Shine-Dalgarno cleft in the 70S ribosome. This chain is Small ribosomal subunit protein uS11, found in Bdellovibrio bacteriovorus (strain ATCC 15356 / DSM 50701 / NCIMB 9529 / HD100).